Consider the following 91-residue polypeptide: Islet amyloid polypeptide (91 aa).

An N-terminal signal peptide occupies residues 1 to 22 (MGILKLPVVLIVLCVALNHLEG). A propeptide spanning residues 23-33 (GGKPTESHQME) is cleaved from the precursor. The cysteines at positions 37 and 42 are disulfide-linked. Tyr72 is subject to Tyrosine amide. A propeptide spanning residues 78 to 91 (VEILKREPLSYLPI) is cleaved from the precursor.

The protein belongs to the calcitonin family. Can form homodimers. Interacts with IDE and INS. Interaction with INS inhibits homodimerization and fibril formation.

It localises to the secreted. Its function is as follows. Amylin/IAPP is a glucoregulatory peptide hormone that plays an important role in the regulation of energy homeostasis. Selectively inhibits insulin-stimulated glucose utilization and glycogen deposition in muscle, while not affecting adipocyte glucose metabolism. IAPP function is mediated by the CALCR-RAMPs (AMYRs) receptor complexes. Amylin can also bind CALCR receptor in the absence of RAMPs, although it is more selective for AMYRs. In Bos taurus (Bovine), this protein is Islet amyloid polypeptide (IAPP).